The primary structure comprises 42 residues: uncharacterized protein (42 aa).

A disordered region spans residues 20 to 42 (RSGRAERGVRAHSPAWSERPTPN).

This is an uncharacterized protein from Escherichia coli.